Reading from the N-terminus, the 372-residue chain is NAD(P)H-quinone oxidoreductase subunit 1 (372 aa).

The next 9 membrane-spanning stretches (helical) occupy residues 27-47 (AIWMPLPMILMLIGATVGVLV), 65-85 (PEYIGPLGLLAPVADGLKLVF), 97-117 (WLFTLGPILVVLPVFLSYLIV), 128-148 (VGTGIFLWIALSSIQPIGLLM), 166-186 (AAQSISYEIPLALSVLAIVMM), 204-224 (ILGWNIWRQPLGFMIFWIAAL), 266-286 (ILSALLVAVLYLGGWDFPIPI), 308-328 (ALGITMTLVKAYFLVFIAILL), and 347-367 (FLLPVGLVNLLLTAALKLAFP).

It belongs to the complex I subunit 1 family. As to quaternary structure, NDH-1 is composed of at least 11 different subunits.

It localises to the cellular thylakoid membrane. The catalysed reaction is a plastoquinone + NADH + (n+1) H(+)(in) = a plastoquinol + NAD(+) + n H(+)(out). It carries out the reaction a plastoquinone + NADPH + (n+1) H(+)(in) = a plastoquinol + NADP(+) + n H(+)(out). Functionally, NDH-1 shuttles electrons from an unknown electron donor, via FMN and iron-sulfur (Fe-S) centers, to quinones in the respiratory and/or the photosynthetic chain. The immediate electron acceptor for the enzyme in this species is believed to be plastoquinone. Couples the redox reaction to proton translocation, and thus conserves the redox energy in a proton gradient. This is NAD(P)H-quinone oxidoreductase subunit 1 from Nostoc sp. (strain PCC 7120 / SAG 25.82 / UTEX 2576).